The following is a 705-amino-acid chain: Elongation factor G 2 (705 aa).

The tr-type G domain maps to Glu-8–Ala-288. Residues Ala-17–Thr-24, Asp-86–His-90, and Asn-140–Asp-143 each bind GTP.

This sequence belongs to the TRAFAC class translation factor GTPase superfamily. Classic translation factor GTPase family. EF-G/EF-2 subfamily.

It is found in the cytoplasm. Catalyzes the GTP-dependent ribosomal translocation step during translation elongation. During this step, the ribosome changes from the pre-translocational (PRE) to the post-translocational (POST) state as the newly formed A-site-bound peptidyl-tRNA and P-site-bound deacylated tRNA move to the P and E sites, respectively. Catalyzes the coordinated movement of the two tRNA molecules, the mRNA and conformational changes in the ribosome. The polypeptide is Elongation factor G 2 (Bordetella parapertussis (strain 12822 / ATCC BAA-587 / NCTC 13253)).